We begin with the raw amino-acid sequence, 295 residues long: Protoheme IX farnesyltransferase (295 aa).

Helical transmembrane passes span 8-28, 35-55, 84-104, 107-127, 132-152, 162-182, 208-228, 233-253, and 264-284; these read VTKP…FLLA, YTLF…GCVF, VSLV…WFGA, LACW…SLYM, VYGT…GYCA, LILL…IAIF, ITLY…GGYA, LVVA…GYKV, and FVFS…DFMV.

This sequence belongs to the UbiA prenyltransferase family. Protoheme IX farnesyltransferase subfamily.

Its subcellular location is the cell inner membrane. It carries out the reaction heme b + (2E,6E)-farnesyl diphosphate + H2O = Fe(II)-heme o + diphosphate. Its pathway is porphyrin-containing compound metabolism; heme O biosynthesis; heme O from protoheme: step 1/1. Functionally, converts heme B (protoheme IX) to heme O by substitution of the vinyl group on carbon 2 of heme B porphyrin ring with a hydroxyethyl farnesyl side group. This Enterobacter sp. (strain 638) protein is Protoheme IX farnesyltransferase.